We begin with the raw amino-acid sequence, 435 residues long: Citrate synthase (435 aa).

Residues His-311 and Asp-370 contribute to the active site.

This sequence belongs to the citrate synthase family.

The enzyme catalyses oxaloacetate + acetyl-CoA + H2O = citrate + CoA + H(+). It functions in the pathway carbohydrate metabolism; tricarboxylic acid cycle; isocitrate from oxaloacetate: step 1/2. The sequence is that of Citrate synthase (gltA) from Rickettsia slovaca (strain 13-B).